Consider the following 163-residue polypeptide: Epithelial membrane protein 3 (163 aa).

Residues 4-24 (LLLVVSALHILILVLLFVATL) form a helical membrane-spanning segment. N-linked (GlcNAc...) asparagine glycosylation is found at N46 and N56. A run of 3 helical transmembrane segments spans residues 66-86 (VQAL…LFMI), 100-120 (TGLC…IYAI), and 139-159 (FALA…YIHL).

It belongs to the PMP-22/EMP/MP20 family.

Its subcellular location is the membrane. In terms of biological role, probably involved in cell proliferation and cell-cell interactions. This Rattus norvegicus (Rat) protein is Epithelial membrane protein 3 (Emp3).